Reading from the N-terminus, the 424-residue chain is Serine hydroxymethyltransferase (424 aa).

Residues L113 and 117–119 (GHL) contribute to the (6S)-5,6,7,8-tetrahydrofolate site. K222 is modified (N6-(pyridoxal phosphate)lysine). 361 to 363 (SPF) is a (6S)-5,6,7,8-tetrahydrofolate binding site.

It belongs to the SHMT family. As to quaternary structure, homodimer. Pyridoxal 5'-phosphate serves as cofactor.

It is found in the cytoplasm. It catalyses the reaction (6R)-5,10-methylene-5,6,7,8-tetrahydrofolate + glycine + H2O = (6S)-5,6,7,8-tetrahydrofolate + L-serine. Its pathway is one-carbon metabolism; tetrahydrofolate interconversion. It participates in amino-acid biosynthesis; glycine biosynthesis; glycine from L-serine: step 1/1. Its function is as follows. Catalyzes the reversible interconversion of serine and glycine with tetrahydrofolate (THF) serving as the one-carbon carrier. This reaction serves as the major source of one-carbon groups required for the biosynthesis of purines, thymidylate, methionine, and other important biomolecules. Also exhibits THF-independent aldolase activity toward beta-hydroxyamino acids, producing glycine and aldehydes, via a retro-aldol mechanism. The chain is Serine hydroxymethyltransferase from Flavobacterium psychrophilum (strain ATCC 49511 / DSM 21280 / CIP 103535 / JIP02/86).